We begin with the raw amino-acid sequence, 118 residues long: Ribonuclease P protein component (118 aa).

The protein belongs to the RnpA family. As to quaternary structure, consists of a catalytic RNA component (M1 or rnpB) and a protein subunit.

The catalysed reaction is Endonucleolytic cleavage of RNA, removing 5'-extranucleotides from tRNA precursor.. Its function is as follows. RNaseP catalyzes the removal of the 5'-leader sequence from pre-tRNA to produce the mature 5'-terminus. It can also cleave other RNA substrates such as 4.5S RNA. The protein component plays an auxiliary but essential role in vivo by binding to the 5'-leader sequence and broadening the substrate specificity of the ribozyme. In Rickettsia rickettsii (strain Iowa), this protein is Ribonuclease P protein component.